The following is an 81-amino-acid chain: Photosystem I iron-sulfur center (81 aa).

2 4Fe-4S ferredoxin-type domains span residues 2–31 (AHSV…MVPW) and 39–68 (IASA…VRVY). Cysteine 11, cysteine 14, cysteine 17, cysteine 21, cysteine 48, cysteine 51, cysteine 54, and cysteine 58 together coordinate [4Fe-4S] cluster.

The eukaryotic PSI reaction center is composed of at least 11 subunits. [4Fe-4S] cluster is required as a cofactor.

It localises to the plastid. Its subcellular location is the chloroplast thylakoid membrane. It carries out the reaction reduced [plastocyanin] + hnu + oxidized [2Fe-2S]-[ferredoxin] = oxidized [plastocyanin] + reduced [2Fe-2S]-[ferredoxin]. Its function is as follows. Apoprotein for the two 4Fe-4S centers FA and FB of photosystem I (PSI); essential for photochemical activity. FB is the terminal electron acceptor of PSI, donating electrons to ferredoxin. The C-terminus interacts with PsaA/B/D and helps assemble the protein into the PSI complex. Required for binding of PsaD and PsaE to PSI. PSI is a plastocyanin-ferredoxin oxidoreductase, converting photonic excitation into a charge separation, which transfers an electron from the donor P700 chlorophyll pair to the spectroscopically characterized acceptors A0, A1, FX, FA and FB in turn. In Gnetum gnemon (Spanish joint-fir), this protein is Photosystem I iron-sulfur center.